A 436-amino-acid polypeptide reads, in one-letter code: MANVVVIGAQWGDEGKGKITDLLSRSADVVVRYQGGVNAGHTIVVDDKVLKLHLIPSGILYEDTTCLIGSGTVVDPKILLKEIDMLIENGIDISGLKISSTSHVTMPYHRLLDEAMEADRGSNKIGTTGRGIGPTYADKSQRNGIRIRDLLNEDRLKDVLEIPLKEKNGVLEKIYGIRPLCKDEIIKEYLDYGKRLSKHVVDCTRTIHSAAKNKQNILFEGAQGTLLDLDHGTYPFVTSSNPISGGACIGAGVGPTLIDRVIGVAKAYTTRVGEGPFVTELQGSINDQLCDRGSEFGTTTGRRRRCGWFDGVIGKYAVYVNGLDCLAVTKLDVLDELDEIQVCIAYELDGKEIDYFPTNSDDLKKCKPIFKKLKGWQCSTANCRKLSDLPENAMNYLRFLAELMEVPIAIVSLGANRDQTIVIEDPIHGPKRALLR.

GTP is bound by residues 12-18 and 40-42; these read GDEGKGK and GHT. Aspartate 13 functions as the Proton acceptor in the catalytic mechanism. Mg(2+)-binding residues include aspartate 13 and glycine 40. Residues 13–16, 38–41, threonine 128, arginine 142, glutamine 223, threonine 238, and arginine 302 each bind IMP; these read DEGK and NAGH. Histidine 41 serves as the catalytic Proton donor. 298–304 contributes to the substrate binding site; that stretch reads TTTGRRR. Residues arginine 304, 330 to 332, and 412 to 414 each bind GTP; these read KLD and SLG.

The protein belongs to the adenylosuccinate synthetase family. As to quaternary structure, homodimer. Requires Mg(2+) as cofactor.

The protein localises to the cytoplasm. The catalysed reaction is IMP + L-aspartate + GTP = N(6)-(1,2-dicarboxyethyl)-AMP + GDP + phosphate + 2 H(+). It functions in the pathway purine metabolism; AMP biosynthesis via de novo pathway; AMP from IMP: step 1/2. Its function is as follows. Plays an important role in the de novo pathway of purine nucleotide biosynthesis. Catalyzes the first committed step in the biosynthesis of AMP from IMP. This chain is Adenylosuccinate synthetase, found in Prochlorococcus marinus (strain MIT 9515).